An 816-amino-acid polypeptide reads, in one-letter code: Phosphatidylinositol 4-kinase beta (816 aa).

Disordered regions lie at residues 1–30 (MGDT…GSLL), 99–120 (EEED…RRRR), and 248–318 (AHRK…SFSS). N-acetylglycine is present on Gly2. Positions 2–68 (GDTVVEPAPL…VKLLHGGVAV (67 aa)) are interaction with ACBD3. The PIK helical domain occupies 52–242 (CQDVLEKVKL…GTKLRKLILS (191 aa)). The residue at position 258 (Ser258) is a Phosphoserine. Thr263 carries the post-translational modification Phosphothreonine. 5 positions are modified to phosphoserine: Ser266, Ser275, Ser277, Ser284, and Ser294. Polar residues-rich tracts occupy residues 278–297 (DATA…SNPK) and 306–318 (SSST…SFSS). Residue Ser428 is modified to Phosphoserine. A Phosphothreonine modification is found at Thr438. Ser511 carries the post-translational modification Phosphoserine. A phosphothreonine mark is found at Thr517 and Thr519. The PI3K/PI4K catalytic domain occupies 535 to 801 (EPWQEKVRRI…MVDGSMRSIT (267 aa)). Residues 541–547 (VRRIREG) are G-loop. Residues 668–676 (QVKDRHNGN) form a catalytic loop region. Positions 687 to 711 (HIDFGFILSSSPRNLGFETSAFKLT) are activation loop.

This sequence belongs to the PI3/PI4-kinase family. Type III PI4K subfamily. Interacts with ARF1 and ARF3 in the Golgi complex, but not with ARF4, ARF5 or ARF6. Interacts with NCS1/FREQ in a calcium-independent manner. Interacts with CALN1/CABP8 and CALN2/CABP7; in a calcium-dependent manner; this interaction competes with NCS1/FREQ binding. Interacts with ACBD3. Interacts with ARMH3, YWHAB, YWHAE, YWHAG, YWHAH, YWHAQ, YWHAZ and SFN. Interacts with GGA2 (via VHS domain); the interaction is important for PI4KB location at the Golgi apparatus membrane. Interacts with ATG9A. Mg(2+) serves as cofactor. It depends on Mn(2+) as a cofactor.

It is found in the endomembrane system. The protein resides in the mitochondrion outer membrane. Its subcellular location is the rough endoplasmic reticulum membrane. The protein localises to the golgi apparatus. It localises to the golgi apparatus membrane. The catalysed reaction is a 1,2-diacyl-sn-glycero-3-phospho-(1D-myo-inositol) + ATP = a 1,2-diacyl-sn-glycero-3-phospho-(1D-myo-inositol 4-phosphate) + ADP + H(+). Its activity is regulated as follows. Inhibited by wortmannin. Increased kinase activity upon interaction with NCS1/FREQ. Phosphorylates phosphatidylinositol (PI) in the first committed step in the production of the second messenger inositol-1,4,5,-trisphosphate (PIP). May regulate Golgi disintegration/reorganization during mitosis, possibly via its phosphorylation. Involved in Golgi-to-plasma membrane trafficking. The sequence is that of Phosphatidylinositol 4-kinase beta (PI4KB) from Callithrix jacchus (White-tufted-ear marmoset).